Consider the following 388-residue polypeptide: UTP--glucose-1-phosphate uridylyltransferase (388 aa).

D118 serves as a coordination point for Mg(2+).

It belongs to the CugP-type UDP-glucose pyrophosphorylase family. Requires Mg(2+) as cofactor.

The enzyme catalyses alpha-D-glucose 1-phosphate + UTP + H(+) = UDP-alpha-D-glucose + diphosphate. In terms of biological role, catalyzes the formation of UDP-glucose, from UTP and glucose 1-phosphate. Is highly specific since it cannot use other NTPs such as dTTP, CTP, ATP, and GTP, and other sugar-1P such as GlcNAc-1P, Gal-1P, and Man-1P, as substrates. Has probably a central and essential role as the substrate supplier for galactolipid synthesis; galactolipids are major constituents of the photosynthetic thylakoid membrane and important for photosynthetic activity. This chain is UTP--glucose-1-phosphate uridylyltransferase, found in Synechocystis sp. (strain ATCC 27184 / PCC 6803 / Kazusa).